The sequence spans 159 residues: Ribosomal RNA large subunit methyltransferase H (159 aa).

Positions 76 and 108 each coordinate S-adenosyl-L-methionine.

It belongs to the RNA methyltransferase RlmH family. As to quaternary structure, homodimer.

It localises to the cytoplasm. It catalyses the reaction pseudouridine(1915) in 23S rRNA + S-adenosyl-L-methionine = N(3)-methylpseudouridine(1915) in 23S rRNA + S-adenosyl-L-homocysteine + H(+). Specifically methylates the pseudouridine at position 1915 (m3Psi1915) in 23S rRNA. This chain is Ribosomal RNA large subunit methyltransferase H, found in Ligilactobacillus salivarius (strain UCC118) (Lactobacillus salivarius).